A 266-amino-acid polypeptide reads, in one-letter code: Putative carbamate hydrolase RutD (266 aa).

The AB hydrolase-1 domain maps to 14 to 115 (PVVVLISGLG…TMLVSVNGWL (102 aa)).

Belongs to the AB hydrolase superfamily. Hydrolase RutD family.

It catalyses the reaction carbamate + 2 H(+) = NH4(+) + CO2. Functionally, involved in pyrimidine catabolism. May facilitate the hydrolysis of carbamate, a reaction that can also occur spontaneously. The polypeptide is Putative carbamate hydrolase RutD (Shigella flexneri serotype 5b (strain 8401)).